Consider the following 222-residue polypeptide: Arginine ABC transporter permease protein ArtM (222 aa).

At 1–15 the chain is on the periplasmic side; it reads MFEYLPELMKGLHTS. The ABC transmembrane type-1 domain maps to 12–208; the sequence is LHTSLTLTVA…VVNGLLTLMM (197 aa). A helical transmembrane segment spans residues 16 to 36; it reads LTLTVASLIVALILALIFTII. Residues 37 to 49 lie on the Cytoplasmic side of the membrane; the sequence is LTLKTPVLVWLVR. Residues 50 to 70 form a helical membrane-spanning segment; it reads GYITLFTGTPLLVQIFLIYYG. The Periplasmic portion of the chain corresponds to 71-79; that stretch reads PGQFPTLQE. The chain crosses the membrane as a helical span at residues 80–100; sequence YPALWHLLSEPWLCALIALSL. The Cytoplasmic segment spans residues 101-154; it reads NSAAYTTQLFYGAIRAIPEGQWQSCSALGMSKKDTLAILLPYAFKRSLSSYSNE. A helical transmembrane segment spans residues 155–175; that stretch reads VVLVFKSTSLAYTITLMEVMG. The Periplasmic segment spans residues 176–186; it reads YSQLLYGRTYD. Residues 187-207 form a helical membrane-spanning segment; the sequence is VMVFGAAGIIYLVVNGLLTLM. Residues 208 to 222 are Cytoplasmic-facing; the sequence is MRLIERKALAFERRN.

The protein belongs to the binding-protein-dependent transport system permease family. HisMQ subfamily. In terms of assembly, the complex is composed of two ATP-binding proteins (ArtP), two transmembrane proteins (ArtM and ArtQ) and two solute-binding proteins (ArtJ and ArtI).

It localises to the cell inner membrane. In terms of biological role, part of the ABC transporter complex ArtPIQMJ involved in arginine transport. Probably responsible for the translocation of the substrate across the membrane. In Escherichia coli (strain K12), this protein is Arginine ABC transporter permease protein ArtM (artM).